A 344-amino-acid chain; its full sequence is Transcription factor AIG1 (344 aa).

The region spanning 131–180 (AASKSHSEAERRRRERINTHLAKLRSILPNTTKTDKASLLAEVIQHMKEL) is the bHLH domain. The disordered stretch occupies residues 313 to 344 (NDESNDNNNLEKSSSGGIKRQRTSKMVNRCYN). Positions 318 to 327 (DNNNLEKSSS) are enriched in low complexity.

In terms of assembly, homodimer. Interacts with LHW.

The protein localises to the nucleus. Transcription factor required for MONOPTEROS-dependent root initiation in embryo. Transcriptionally controlled by MONOPTEROS. The sequence is that of Transcription factor AIG1 (BHLH32) from Arabidopsis thaliana (Mouse-ear cress).